The sequence spans 887 residues: Leucine--tRNA ligase (887 aa).

The 'HIGH' region motif lies at 48 to 58; that stretch reads PYPSGKLHMGH. The 'KMSKS' region signature appears at 644–648; it reads TMSKS. K647 contributes to the ATP binding site.

The protein belongs to the class-I aminoacyl-tRNA synthetase family.

The protein resides in the cytoplasm. It catalyses the reaction tRNA(Leu) + L-leucine + ATP = L-leucyl-tRNA(Leu) + AMP + diphosphate. In Leptothrix cholodnii (strain ATCC 51168 / LMG 8142 / SP-6) (Leptothrix discophora (strain SP-6)), this protein is Leucine--tRNA ligase.